The sequence spans 160 residues: uncharacterized protein (160 aa).

An N-terminal signal peptide occupies residues 1-29 (MTGKTHIMGGIASCTAAAYYYGFDPVLMA). The next 2 helical transmembrane spans lie at 67–87 (TFTH…TYIP) and 137–157 (QLVL…LFHG).

It to E.coli YdjM.

Its subcellular location is the cell membrane. This is an uncharacterized protein from Bacillus subtilis (strain 168).